A 230-amino-acid chain; its full sequence is Large ribosomal subunit protein uL1 (230 aa).

This sequence belongs to the universal ribosomal protein uL1 family. Part of the 50S ribosomal subunit.

Functionally, binds directly to 23S rRNA. The L1 stalk is quite mobile in the ribosome, and is involved in E site tRNA release. Its function is as follows. Protein L1 is also a translational repressor protein, it controls the translation of the L11 operon by binding to its mRNA. The protein is Large ribosomal subunit protein uL1 of Erythrobacter litoralis (strain HTCC2594).